A 51-amino-acid polypeptide reads, in one-letter code: Protein Tat (51 aa).

Residues 1 to 25 are compositionally biased toward polar residues; that stretch reads EAETATKSCSGRQANQVSLPKQPAS. The tract at residues 1–51 is disordered; that stretch reads EAETATKSCSGRQANQVSLPKQPASQPRGDPTGPKESKKKVETETETDPVN. K21 is covalently cross-linked (Glycyl lysine isopeptide (Lys-Gly) (interchain with G-Cter in ubiquitin)). Residues 28 to 30 carry the Cell attachment site motif; the sequence is RGD. The segment covering 33–43 has biased composition (basic and acidic residues); sequence GPKESKKKVET.

The protein belongs to the lentiviruses Tat family. As to quaternary structure, interacts with host CCNT1. Associates with the P-TEFb complex composed at least of Tat, P-TEFb (CDK9 and CCNT1), TAR RNA, RNA Pol II. Recruits the HATs CREBBP, TAF1/TFIID, EP300, PCAF and GCN5L2. Interacts with host KAT5/Tip60; this interaction targets the latter to degradation. Interacts with the host deacetylase SIRT1. Interacts with host capping enzyme RNGTT; this interaction stimulates RNGTT. Binds to host KDR, and to the host integrins ITGAV/ITGB3 and ITGA5/ITGB1. Interacts with host KPNB1/importin beta-1 without previous binding to KPNA1/importin alpha-1. Interacts with EIF2AK2. Interacts with host nucleosome assembly protein NAP1L1; this interaction may be required for the transport of Tat within the nucleus, since the two proteins interact at the nuclear rim. Interacts with host C1QBP/SF2P32; this interaction involves lysine-acetylated Tat. Interacts with the host chemokine receptors CCR2, CCR3 and CXCR4. Interacts with host DPP4/CD26; this interaction may trigger an anti-proliferative effect. Interacts with host LDLR. Interacts with the host extracellular matrix metalloproteinase MMP1. Interacts with host PRMT6; this interaction mediates Tat's methylation. Interacts with, and is ubiquitinated by MDM2/Hdm2. Interacts with host PSMC3 and HTATIP2. Interacts with STAB1; this interaction may overcome SATB1-mediated repression of IL2 and IL2RA (interleukin) in T cells by binding to the same domain than HDAC1. Interacts (when acetylated) with human CDK13, thereby increasing HIV-1 mRNA splicing and promoting the production of the doubly spliced HIV-1 protein Nef. In terms of processing, acetylation by EP300, CREBBP, GCN5L2/GCN5 and PCAF regulates the transactivation activity of Tat. Post-translationally, phosphorylated by EIF2AK2 on serine and threonine residues adjacent to the basic region important for TAR RNA binding and function. Phosphorylation of Tat by EIF2AK2 is dependent on the prior activation of EIF2AK2 by dsRNA. Asymmetrical arginine methylation by host PRMT6 seems to diminish the transactivation capacity of Tat and affects the interaction with host CCNT1. In terms of processing, polyubiquitination by MDM2 does not target Tat to degradation, but activates its transactivation function and fosters interaction with CCNT1 and TAR RNA.

The protein localises to the host nucleus. The protein resides in the host nucleolus. Its subcellular location is the host cytoplasm. It localises to the secreted. Functionally, transcriptional activator that increases RNA Pol II processivity, thereby increasing the level of full-length viral transcripts. Recognizes a hairpin structure at the 5'-LTR of the nascent viral mRNAs referred to as the transactivation responsive RNA element (TAR) and recruits the cyclin T1-CDK9 complex (P-TEFb complex) that will in turn hyperphosphorylate the RNA polymerase II to allow efficient elongation. The CDK9 component of P-TEFb and other Tat-activated kinases hyperphosphorylate the C-terminus of RNA Pol II that becomes stabilized and much more processive. Other factors such as HTATSF1/Tat-SF1, SUPT5H/SPT5, and HTATIP2 are also important for Tat's function. Besides its effect on RNA Pol II processivity, Tat induces chromatin remodeling of proviral genes by recruiting the histone acetyltransferases (HATs) CREBBP, EP300 and PCAF to the chromatin. This also contributes to the increase in proviral transcription rate, especially when the provirus integrates in transcriptionally silent region of the host genome. To ensure maximal activation of the LTR, Tat mediates nuclear translocation of NF-kappa-B by interacting with host RELA. Through its interaction with host TBP, Tat may also modulate transcription initiation. Tat can reactivate a latently infected cell by penetrating in it and transactivating its LTR promoter. In the cytoplasm, Tat is thought to act as a translational activator of HIV-1 mRNAs. Extracellular circulating Tat can be endocytosed by surrounding uninfected cells via the binding to several surface receptors such as CD26, CXCR4, heparan sulfate proteoglycans (HSPG) or LDLR. Neurons are rarely infected, but they internalize Tat via their LDLR. Endosomal low pH allows Tat to cross the endosome membrane to enter the cytosol and eventually further translocate into the nucleus, thereby inducing severe cell dysfunctions ranging from cell activation to cell death. Through its interaction with nuclear HATs, Tat is potentially able to control the acetylation-dependent cellular gene expression. Tat seems to inhibit the HAT activity of KAT5/Tip60 and TAF1, and consequently modify the expression of specific cellular genes. Modulates the expression of many cellular genes involved in cell survival, proliferation or in coding for cytokines (such as IL10) or cytokine receptors. May be involved in the derepression of host interleukin IL2 expression. Mediates the activation of cyclin-dependent kinases and dysregulation of microtubule network. Tat plays a role in T-cell and neurons apoptosis. Tat induced neurotoxicity and apoptosis probably contribute to neuroAIDS. Host extracellular matrix metalloproteinase MMP1 cleaves Tat and decreases Tat's mediated neurotoxicity. Circulating Tat also acts as a chemokine-like and/or growth factor-like molecule that binds to specific receptors on the surface of the cells, affecting many cellular pathways. In the vascular system, Tat binds to ITGAV/ITGB3 and ITGA5/ITGB1 integrins dimers at the surface of endothelial cells and competes with bFGF for heparin-binding sites, leading to an excess of soluble bFGF. Binds to KDR/VEGFR-2. All these Tat-mediated effects enhance angiogenesis in Kaposi's sarcoma lesions. In Homo sapiens (Human), this protein is Protein Tat.